A 76-amino-acid polypeptide reads, in one-letter code: Brevinin-2ISa (76 aa).

An N-terminal signal peptide occupies residues Met-1–Cys-22. A propeptide spans Glu-23–Val-41 (removed in mature form). Cys-70 and Cys-76 are disulfide-bonded.

In terms of tissue distribution, expressed by the skin glands.

It localises to the secreted. Functionally, has antimicrobial activity against Gram-negative bacterium E.coli ATCC 8739 (MIC=50 ug), against Gram positive bacteria S.aureus ATCC 6538 (MIC=12.5 ug), methicillin-resistant S.aureus ATCC 43300 (MIC=100 ug) and B.subtilis ATCC 6633 (MIC=12.5 ug). Has no activity against fungus C.albicans ATCC 90028. The chain is Brevinin-2ISa from Odorrana ishikawae (Ishikawa's frog).